The primary structure comprises 152 residues: UPF0178 protein YPTS_2857 (152 aa).

Belongs to the UPF0178 family.

The sequence is that of UPF0178 protein YPTS_2857 from Yersinia pseudotuberculosis serotype IB (strain PB1/+).